Here is a 312-residue protein sequence, read N- to C-terminus: Glyoxylate/hydroxypyruvate reductase A (312 aa).

The active site involves arginine 227. Catalysis depends on histidine 275, which acts as the Proton donor.

The protein belongs to the D-isomer specific 2-hydroxyacid dehydrogenase family. GhrA subfamily.

It is found in the cytoplasm. The enzyme catalyses glycolate + NADP(+) = glyoxylate + NADPH + H(+). It catalyses the reaction (R)-glycerate + NAD(+) = 3-hydroxypyruvate + NADH + H(+). The catalysed reaction is (R)-glycerate + NADP(+) = 3-hydroxypyruvate + NADPH + H(+). Its function is as follows. Catalyzes the NADPH-dependent reduction of glyoxylate and hydroxypyruvate into glycolate and glycerate, respectively. In Salmonella enteritidis PT4 (strain P125109), this protein is Glyoxylate/hydroxypyruvate reductase A.